The primary structure comprises 150 residues: D-aminoacyl-tRNA deacylase (150 aa).

The Gly-cisPro motif, important for rejection of L-amino acids signature appears at 138 to 139 (GP).

It belongs to the DTD family. In terms of assembly, homodimer.

The protein localises to the cytoplasm. The enzyme catalyses glycyl-tRNA(Ala) + H2O = tRNA(Ala) + glycine + H(+). It catalyses the reaction a D-aminoacyl-tRNA + H2O = a tRNA + a D-alpha-amino acid + H(+). Its function is as follows. An aminoacyl-tRNA editing enzyme that deacylates mischarged D-aminoacyl-tRNAs. Also deacylates mischarged glycyl-tRNA(Ala), protecting cells against glycine mischarging by AlaRS. Acts via tRNA-based rather than protein-based catalysis; rejects L-amino acids rather than detecting D-amino acids in the active site. By recycling D-aminoacyl-tRNA to D-amino acids and free tRNA molecules, this enzyme counteracts the toxicity associated with the formation of D-aminoacyl-tRNA entities in vivo and helps enforce protein L-homochirality. The polypeptide is D-aminoacyl-tRNA deacylase (Parabacteroides distasonis (strain ATCC 8503 / DSM 20701 / CIP 104284 / JCM 5825 / NCTC 11152)).